Here is a 56-residue protein sequence, read N- to C-terminus: Large ribosomal subunit protein bL32B (56 aa).

Positions 1–19 are enriched in basic residues; the sequence is MAVPKRRMSRSNTRHRRAQ. The interval 1 to 22 is disordered; it reads MAVPKRRMSRSNTRHRRAQWKA.

Belongs to the bacterial ribosomal protein bL32 family.

In Streptomyces coelicolor (strain ATCC BAA-471 / A3(2) / M145), this protein is Large ribosomal subunit protein bL32B (rpmF2).